Consider the following 222-residue polypeptide: N-(5'-phosphoribosyl)anthranilate isomerase (222 aa).

Belongs to the TrpF family.

The catalysed reaction is N-(5-phospho-beta-D-ribosyl)anthranilate = 1-(2-carboxyphenylamino)-1-deoxy-D-ribulose 5-phosphate. Its pathway is amino-acid biosynthesis; L-tryptophan biosynthesis; L-tryptophan from chorismate: step 3/5. The polypeptide is N-(5'-phosphoribosyl)anthranilate isomerase (Xanthomonas euvesicatoria pv. vesicatoria (strain 85-10) (Xanthomonas campestris pv. vesicatoria)).